We begin with the raw amino-acid sequence, 262 residues long: Ribosome-recycling factor, mitochondrial (262 aa).

The N-terminal 55 residues, 1–55 (MALGLRCFRLVHPAFCNSLAALTRPVSEVTLQTVRGRQNDHGQCMAYAAVPVRHF), are a transit peptide targeting the mitochondrion.

It belongs to the RRF family.

Its subcellular location is the mitochondrion. Functionally, responsible for the disassembly of ribosomes from messenger RNA at the termination of mitochondrial protein biosynthesis. Acts in collaboration with GFM2. Promotes mitochondrial ribosome recycling by dissolution of intersubunit contacts. This is Ribosome-recycling factor, mitochondrial (MRRF) from Bos taurus (Bovine).